The sequence spans 1294 residues: uncharacterized protein (1294 aa).

Topologically, residues 1–375 (MSQQENGDVA…RNFKLNFSDY (375 aa)) are extracellular. Positions 28-287 (LHVRDLSIVA…FESIGYHVPQ (260 aa)) constitute an ABC transporter 1 domain. N41 is a glycosylation site (N-linked (GlcNAc...) asparagine). Position 62–69 (62–69 (GGSGSGKT)) interacts with ATP. N-linked (GlcNAc...) asparagine glycans are attached at residues N86, N101, N151, N341, N349, and N371. A helical membrane pass occupies residues 376–396 (VTLISTFAEPLIIGTVCGWIY). The Cytoplasmic segment spans residues 397-495 (YKPDKSSIGG…EADARKFFYQ (99 aa)). The chain crosses the membrane as a helical span at residues 496-516 (FAVVFLCQLSCSGLSMLSVAV). Residues 517–530 (SRDFSKASLVGNMT) are Extracellular-facing. N528 is a glycosylation site (N-linked (GlcNAc...) asparagine). A helical transmembrane segment spans residues 531–551 (FTVLSMGCGFFVNAKVMPVYV). The Cytoplasmic segment spans residues 552–604 (RWIKYIAFTWYSFGTLMSSTFTNSYCTTDNLDECLGNQILEVYGFPRNWITVP). A helical transmembrane segment spans residues 605–625 (AVVLLCWSVGYFVVGAIILYL). Residues 626–1038 (HKIDITLQNE…TTTRRSFDSL (413 aa)) are Extracellular-facing. In terms of domain architecture, ABC transporter 2 spans 679–941 (IKLEDIDLRV…FTELGYNCPS (263 aa)). Residue 727-734 (GPSGSGKS) participates in ATP binding. A glycan (N-linked (GlcNAc...) asparagine) is linked at N983. A helical transmembrane segment spans residues 1039 to 1059 (MARIAQIPGLGVIFALFFAPV). The Cytoplasmic segment spans residues 1060–1120 (KHNYTSISNR…PFFLAYMTLE (61 aa)). Residues 1121 to 1141 (LPLSALASVLYAVFTVLACGL) traverse the membrane as a helical segment. At 1142-1266 (PRTAGNFFAT…YGLVRNTQKY (125 aa)) the chain is on the extracellular side. A helical transmembrane segment spans residues 1267-1287 (LGIIVCVAIIYRLIAFFILKA). The Cytoplasmic segment spans residues 1288–1294 (KLEWIKW).

It belongs to the ABC transporter superfamily. ABCG family. PDR (TC 3.A.1.205) subfamily.

It localises to the membrane. This is an uncharacterized protein from Saccharomyces cerevisiae (strain ATCC 204508 / S288c) (Baker's yeast).